We begin with the raw amino-acid sequence, 331 residues long: Adenosine deaminase (331 aa).

Zn(2+) is bound by residues His-12 and His-14. Substrate is bound by residues His-14, Asp-16, and Gly-170. His-197 is a Zn(2+) binding site. The active-site Proton donor is the Glu-200. Residue Asp-278 coordinates Zn(2+). Residue Asp-279 participates in substrate binding.

This sequence belongs to the metallo-dependent hydrolases superfamily. Adenosine and AMP deaminases family. Adenosine deaminase subfamily. It depends on Zn(2+) as a cofactor.

The catalysed reaction is adenosine + H2O + H(+) = inosine + NH4(+). It carries out the reaction 2'-deoxyadenosine + H2O + H(+) = 2'-deoxyinosine + NH4(+). Its function is as follows. Catalyzes the hydrolytic deamination of adenosine and 2-deoxyadenosine. This is Adenosine deaminase from Shewanella loihica (strain ATCC BAA-1088 / PV-4).